The following is a 436-amino-acid chain: Bifunctional protein GlmU (436 aa).

The segment at 1-226 (MNEISIIILA…ETNFMGINDK (226 aa)) is pyrophosphorylase. Residues 9 to 12 (LAAG), lysine 23, glutamine 75, and 82 to 83 (GT) each bind UDP-N-acetyl-alpha-D-glucosamine. Aspartate 105 serves as a coordination point for Mg(2+). Positions 138, 152, 167, and 224 each coordinate UDP-N-acetyl-alpha-D-glucosamine. Asparagine 224 lines the Mg(2+) pocket. The linker stretch occupies residues 227 to 247 (FALSIAEEIMQNRIKENLMKN). An N-acetyltransferase region spans residues 248–436 (GVIMSLPDTI…YKFFGKNDEK (189 aa)). UDP-N-acetyl-alpha-D-glucosamine contacts are provided by arginine 311 and lysine 328. Residue histidine 339 is the Proton acceptor of the active site. The UDP-N-acetyl-alpha-D-glucosamine site is built by tyrosine 342 and asparagine 353. Acetyl-CoA contacts are provided by residues 362–363 (NY), serine 381, alanine 399, and arginine 416.

The protein in the N-terminal section; belongs to the N-acetylglucosamine-1-phosphate uridyltransferase family. In the C-terminal section; belongs to the transferase hexapeptide repeat family. In terms of assembly, homotrimer. The cofactor is Mg(2+).

It localises to the cytoplasm. The enzyme catalyses alpha-D-glucosamine 1-phosphate + acetyl-CoA = N-acetyl-alpha-D-glucosamine 1-phosphate + CoA + H(+). The catalysed reaction is N-acetyl-alpha-D-glucosamine 1-phosphate + UTP + H(+) = UDP-N-acetyl-alpha-D-glucosamine + diphosphate. The protein operates within nucleotide-sugar biosynthesis; UDP-N-acetyl-alpha-D-glucosamine biosynthesis; N-acetyl-alpha-D-glucosamine 1-phosphate from alpha-D-glucosamine 6-phosphate (route II): step 2/2. It functions in the pathway nucleotide-sugar biosynthesis; UDP-N-acetyl-alpha-D-glucosamine biosynthesis; UDP-N-acetyl-alpha-D-glucosamine from N-acetyl-alpha-D-glucosamine 1-phosphate: step 1/1. Its pathway is bacterial outer membrane biogenesis; LPS lipid A biosynthesis. Functionally, catalyzes the last two sequential reactions in the de novo biosynthetic pathway for UDP-N-acetylglucosamine (UDP-GlcNAc). The C-terminal domain catalyzes the transfer of acetyl group from acetyl coenzyme A to glucosamine-1-phosphate (GlcN-1-P) to produce N-acetylglucosamine-1-phosphate (GlcNAc-1-P), which is converted into UDP-GlcNAc by the transfer of uridine 5-monophosphate (from uridine 5-triphosphate), a reaction catalyzed by the N-terminal domain. This Campylobacter fetus subsp. fetus (strain 82-40) protein is Bifunctional protein GlmU.